The following is a 546-amino-acid chain: Type II methyltransferase M.XhoI (546 aa).

This sequence belongs to the N(4)/N(6)-methyltransferase family.

The enzyme catalyses a 2'-deoxyadenosine in DNA + S-adenosyl-L-methionine = an N(6)-methyl-2'-deoxyadenosine in DNA + S-adenosyl-L-homocysteine + H(+). In terms of biological role, a gamma subtype methylase, recognizes the double-stranded sequence 5'-CTCGAG-3', methylates A-5 on both strands, and protects the DNA from cleavage by the XhoI endonuclease. The sequence is that of Type II methyltransferase M.XhoI from Xanthomonas vasicola.